We begin with the raw amino-acid sequence, 198 residues long: T-cell surface glycoprotein CD3 epsilon chain (198 aa).

The N-terminal stretch at 1 to 21 (MQSGTRWRVLGLCLLSIGVWG) is a signal peptide. Over 22–117 (QDGNEEMGSI…RVCENCMEMD (96 aa)) the chain is Extracellular. The region spanning 37–107 (QVSISGTTVI…DASHHLYLKA (71 aa)) is the Ig-like domain. An intrachain disulfide couples Cys-49 to Cys-89. A helical membrane pass occupies residues 118-138 (VMAVATIVIVDICITLGLLLL). Residues 139 to 198 (VYYWSKNRKAKAKPVTRGAGAGGRQRGQNKERPPPVPNPDYEPIRKGQQDLYSGLNQRRI) are Cytoplasmic-facing. Positions 152–198 (PVTRGAGAGGRQRGQNKERPPPVPNPDYEPIRKGQQDLYSGLNQRRI) are disordered. Residues 166–183 (QNKERPPPVPNPDYEPIR) are NUMB-binding region. The 28-residue stretch at 169-196 (ERPPPVPNPDYEPIRKGQQDLYSGLNQR) folds into the ITAM domain. Residues 170–177 (RPPPVPNP) are proline-rich sequence. A phosphotyrosine mark is found at Tyr-179 and Tyr-190. A compositionally biased stretch (polar residues) spans 188-198 (DLYSGLNQRRI).

The TCR-CD3 complex is composed of a CD3D/CD3E and a CD3G/CD3E heterodimers that preferentially associate with TCRalpha and TCRbeta, respectively, to form TCRalpha/CD3E/CD3G and TCRbeta/CD3G/CD3E trimers. In turn, the hexamer interacts with CD3Z homodimer to form the TCR-CD3 complex. Alternatively, TCRalpha and TCRbeta can be replaced by TCRgamma and TCRdelta. Interacts with CD6. Interacts (via Proline-rich sequence) with NCK1; the interaction is ligand dependent but independent of tyrosine kinase activation. In terms of processing, phosphorylated on Tyr residues after T-cell receptor triggering by LCK in association with CD4/CD8.

The protein localises to the cell membrane. Functionally, part of the TCR-CD3 complex present on T-lymphocyte cell surface that plays an essential role in adaptive immune response. When antigen presenting cells (APCs) activate T-cell receptor (TCR), TCR-mediated signals are transmitted across the cell membrane by the CD3 chains CD3D, CD3E, CD3G and CD3Z. All CD3 chains contain immunoreceptor tyrosine-based activation motifs (ITAMs) in their cytoplasmic domain. Upon TCR engagement, these motifs become phosphorylated by Src family protein tyrosine kinases LCK and FYN, resulting in the activation of downstream signaling pathways. In addition of this role of signal transduction in T-cell activation, CD3E plays an essential role in correct T-cell development. Also participates in internalization and cell surface down-regulation of TCR-CD3 complexes via endocytosis sequences present in CD3E cytosolic region. In addition to its role as a TCR coreceptor, it serves as a receptor for ITPRIPL1. Ligand recognition inhibits T-cell activation by promoting interaction with NCK1, which prevents CD3E-ZAP70 interaction and blocks the ERK-NFkB signaling cascade and calcium influx. This chain is T-cell surface glycoprotein CD3 epsilon chain (CD3E), found in Macaca fascicularis (Crab-eating macaque).